The following is a 424-amino-acid chain: Tyrosine--tRNA ligase (424 aa).

Residue Y37 coordinates L-tyrosine. The 'HIGH' region motif lies at 42–51 (PTADSLHLGH). Positions 175 and 179 each coordinate L-tyrosine. Positions 235-239 (KFGKT) match the 'KMSKS' region motif. An ATP-binding site is contributed by K238. The 58-residue stretch at 357–414 (ADLQQALVNAELVPSRGQARTMIGSNAVAINGEKQADPEYVFTDADRLFGRYTLLRRG) folds into the S4 RNA-binding domain.

This sequence belongs to the class-I aminoacyl-tRNA synthetase family. TyrS type 1 subfamily. Homodimer.

The protein localises to the cytoplasm. The enzyme catalyses tRNA(Tyr) + L-tyrosine + ATP = L-tyrosyl-tRNA(Tyr) + AMP + diphosphate + H(+). Its function is as follows. Catalyzes the attachment of tyrosine to tRNA(Tyr) in a two-step reaction: tyrosine is first activated by ATP to form Tyr-AMP and then transferred to the acceptor end of tRNA(Tyr). The polypeptide is Tyrosine--tRNA ligase (Yersinia pestis bv. Antiqua (strain Antiqua)).